A 1119-amino-acid chain; its full sequence is GATOR2 complex protein MIOS (1119 aa).

Residues 3 to 43 form a WD 1 repeat; sequence QSSTRKRLIQWSPHNKSSFIVGSNDLRLYNFKFKDKNEKKN. Positions 41–60 are disordered; that stretch reads KKNENNINNSNQYNQNNQQQ. Residues 45–60 show a composition bias toward low complexity; that stretch reads NNINNSNQYNQNNQQQ. WD repeat units follow at residues 127–169, 183–227, 281–321, 324–364, and 368–409; these read KTIS…ILTS, KHTR…STTL, TQSE…SSQS, AHQK…DPLI, and SNCK…EFSK. The interval 413–455 is disordered; the sequence is LESTTLSTGGGGSGSNTSNNLNKRSTSNNNNSQDPINTISKPT. Low complexity predominate over residues 427–444; the sequence is SNTSNNLNKRSTSNNNNS. A WD 7 repeat occupies 459 to 499; that stretch reads HSSDVVSSFSWHPTNECRMLTVSYSGVIDVVSLNENIPISW. Residues 601–669 form a disordered region; the sequence is PSISTTTPGG…NNNNNNNNNN (69 aa). Residues 973 to 1016 form a C4-type zinc finger; sequence AKCGFCQNSFAFESISASSIVGRNASSKPNFKAKVPFCPHCKQS. Cys-975, Cys-978, Cys-1010, Cys-1013, Cys-1023, Cys-1085, Cys-1088, His-1090, His-1093, His-1096, Cys-1107, Cys-1112, and Cys-1116 together coordinate Zn(2+).

Belongs to the WD repeat mio family. Probably part of the GATOR complex.

The protein resides in the lysosome membrane. In terms of biological role, as a component of the GATOR complex may function in the amino acid-sensing branch of the TORC1 signaling pathway. In Dictyostelium discoideum (Social amoeba), this protein is GATOR2 complex protein MIOS.